We begin with the raw amino-acid sequence, 1020 residues long: LLGL scribble cell polarity complex component 2 (1020 aa).

WD repeat units lie at residues 36-69, 76-117, 132-169, 193-227, 233-268, 282-324, 332-366, 388-464, 508-583, 592-653, 713-769, 778-830, 835-888, and 902-925; these read SALG…FMGL, VTQI…DESF, ITVV…DRTI, ALQE…LYHF, LENI…QPEP, AITR…GQQT, VIGF…VIDL, TCSH…YKLS, QKIF…FVLV, TSLA…LRQS, VRTL…KEIQ, GILV…VSAK, LTAL…VRYS, and VFTK…SLST. S653 carries the post-translational modification Phosphoserine. Over residues 653–669 the composition is skewed to basic residues; the sequence is SFRRMRRSRVSSRKRHP. The tract at residues 653–689 is disordered; it reads SFRRMRRSRVSSRKRHPAGPPGEAQEGSAKAERPGLQ. Disordered regions lie at residues 938-975 and 992-1020; these read AETK…PGLV and STLE…GGAE. 2 positions are modified to phosphoserine: S965 and S1015.

The protein belongs to the WD repeat L(2)GL family. Interacts with GPSM2/LGN, PRKCI/aPKC and PARD6B/Par-6. The complex is enhanced during mitosis. Interacts with DCAF1. In terms of processing, phosphorylated at Ser-653 by PRKCI. Phosphorylation is enhanced during cell polarization induced by calcium. Phosphorylation may occur during the cell-cell contact-induced cell polarization and may contribute to the segregation of LLGL2 from the PRKCI/aPKC and PARD6B/Par-6 complex.

It is found in the cytoplasm. Functionally, part of a complex with GPSM2/LGN, PRKCI/aPKC and PARD6B/Par-6, which may ensure the correct organization and orientation of bipolar spindles for normal cell division. This complex plays roles in the initial phase of the establishment of epithelial cell polarity. This Homo sapiens (Human) protein is LLGL scribble cell polarity complex component 2 (LLGL2).